We begin with the raw amino-acid sequence, 186 residues long: Crossover junction endodeoxyribonuclease RuvC (186 aa).

Active-site residues include Asp-7, Glu-67, and Asp-140. Residues Asp-7, Glu-67, and Asp-140 each contribute to the Mg(2+) site.

The protein belongs to the RuvC family. Homodimer which binds Holliday junction (HJ) DNA. The HJ becomes 2-fold symmetrical on binding to RuvC with unstacked arms; it has a different conformation from HJ DNA in complex with RuvA. In the full resolvosome a probable DNA-RuvA(4)-RuvB(12)-RuvC(2) complex forms which resolves the HJ. Mg(2+) is required as a cofactor.

The protein localises to the cytoplasm. It carries out the reaction Endonucleolytic cleavage at a junction such as a reciprocal single-stranded crossover between two homologous DNA duplexes (Holliday junction).. The RuvA-RuvB-RuvC complex processes Holliday junction (HJ) DNA during genetic recombination and DNA repair. Endonuclease that resolves HJ intermediates. Cleaves cruciform DNA by making single-stranded nicks across the HJ at symmetrical positions within the homologous arms, yielding a 5'-phosphate and a 3'-hydroxyl group; requires a central core of homology in the junction. The consensus cleavage sequence is 5'-(A/T)TT(C/G)-3'. Cleavage occurs on the 3'-side of the TT dinucleotide at the point of strand exchange. HJ branch migration catalyzed by RuvA-RuvB allows RuvC to scan DNA until it finds its consensus sequence, where it cleaves and resolves the cruciform DNA. The polypeptide is Crossover junction endodeoxyribonuclease RuvC (Chloroherpeton thalassium (strain ATCC 35110 / GB-78)).